A 225-amino-acid polypeptide reads, in one-letter code: Histone H1 (225 aa).

Residues M1–T20 form a disordered region. Residues P23–K94 enclose the H15 domain. The tract at residues K95–V147 is disordered. Positions A107–K127 are enriched in basic residues. Over residues A128 to V147 the composition is skewed to low complexity.

It belongs to the histone H1/H5 family.

It is found in the nucleus. The protein resides in the chromosome. Could act as an H1-type linker histone. The polypeptide is Histone H1 (HHOA) (Eremothecium gossypii (strain ATCC 10895 / CBS 109.51 / FGSC 9923 / NRRL Y-1056) (Yeast)).